A 463-amino-acid chain; its full sequence is MALGVREYRNISEIKGPLLVVEGVSRVAYDEIVEVETAAGEKRRGRVLEVGMGYAVVQVFEGTTGISPTGTVVRFMGRPLEIPVTEDMLGRIMNGLGEPIDGGPKIDADERRDVNGAPLNPAERAYPEDFIQTGVSAIDGMNTLVRGQKLPIFSGAGLPHNRLAAQIARQATVRGEEEEFAVVFSAIGIKYDDFLFFKKFFEETGALGRVAMFVNLADEPAMIRLITPRAALTLAEYLAYERDMHVLVIITDMTNYAEALREISAAREEVPGRQGYPGYLYSDLASIYERAGRVKGKKGSITQMPILTMPNDDITHPIPDLTGYITEGQIVLSRELHNRGIYPPINVLMSLSRLMKEGIGPGKTREDHAEVSNQLYASYSRGVELRSLTAVVGEESLSERDRRYLKFADLFEQRFLKQGERENRSIEETLDIAWEILSVLPEEELVNIKEETIKKYHPKYRAG.

It belongs to the ATPase alpha/beta chains family. Has multiple subunits with at least A(3), B(3), C, D, E, F, H, I and proteolipid K(x).

It is found in the cell membrane. Functionally, component of the A-type ATP synthase that produces ATP from ADP in the presence of a proton gradient across the membrane. The B chain is a regulatory subunit. This is A-type ATP synthase subunit B from Aeropyrum pernix (strain ATCC 700893 / DSM 11879 / JCM 9820 / NBRC 100138 / K1).